Here is a 213-residue protein sequence, read N- to C-terminus: Vacuolar protein sorting-associated protein 32 homolog 1 (213 aa).

Coiled-coil stretches lie at residues 11 to 42 and 118 to 176; these read KQET…KKAT and TNID…QLLQ. A disordered region spans residues 180–213; the sequence is IHVPQGNKPARAPAQKQPTAEEDELAALQAEMAL.

This sequence belongs to the SNF7 family. Component of the endosomal sorting required for transport complex III (ESCRT-III), composed at least of VPS2, VPS20, VPS24 and VPS32. Interacts with SKD1. Interacts with BRO1/ALIX.

Its subcellular location is the endosome. Functionally, component of the ESCRT-III complex, which is required for multivesicular bodies (MVBs) formation and sorting of endosomal cargo proteins into MVBs. The ESCRT-III complex is probably involved in the concentration of MVB cargo. This chain is Vacuolar protein sorting-associated protein 32 homolog 1 (VPS32.1), found in Arabidopsis thaliana (Mouse-ear cress).